A 204-amino-acid polypeptide reads, in one-letter code: uncharacterized protein (204 aa).

The segment at 118–169 is disordered; sequence FPAASERPMPSRRLSKATQNVQTRPSERPAPCHRRPGPRGPGGRDPPEACHP.

This is an uncharacterized protein from Encephalitozoon cuniculi (strain GB-M1) (Microsporidian parasite).